The sequence spans 112 residues: Putative UPF0320 protein YEL074W (112 aa).

Residues 93–112 form a disordered region; the sequence is EKSPSKSPKHKNILPFNFTK.

This sequence belongs to the UPF0320 family.

The sequence is that of Putative UPF0320 protein YEL074W from Saccharomyces cerevisiae (strain ATCC 204508 / S288c) (Baker's yeast).